A 307-amino-acid polypeptide reads, in one-letter code: HTH-type transcriptional regulator DmlR (307 aa).

The 58-residue stretch at 5–62 folds into the HTH lysR-type domain; sequence PLLNDLRVFMLVARRAGFAAVAEELGVSPAFVSKRIALLEQTLNVVLLHRTTRRVTIT. The H-T-H motif DNA-binding region spans 22 to 41; it reads FAAVAEELGVSPAFVSKRIA.

It belongs to the LysR transcriptional regulatory family.

In terms of biological role, transcriptional regulator required for the aerobic growth on D-malate as the sole carbon source. Induces the expression of dmlA in response to D-malate or L- or meso-tartrate. Negatively regulates its own expression. The protein is HTH-type transcriptional regulator DmlR (dmlR) of Escherichia coli (strain K12).